The chain runs to 291 residues: Bifunctional protein FolD (291 aa).

Residues 165–167 (GRS), Ser190, and Ile231 each bind NADP(+).

This sequence belongs to the tetrahydrofolate dehydrogenase/cyclohydrolase family. As to quaternary structure, homodimer.

The enzyme catalyses (6R)-5,10-methylene-5,6,7,8-tetrahydrofolate + NADP(+) = (6R)-5,10-methenyltetrahydrofolate + NADPH. It carries out the reaction (6R)-5,10-methenyltetrahydrofolate + H2O = (6R)-10-formyltetrahydrofolate + H(+). Its pathway is one-carbon metabolism; tetrahydrofolate interconversion. Its function is as follows. Catalyzes the oxidation of 5,10-methylenetetrahydrofolate to 5,10-methenyltetrahydrofolate and then the hydrolysis of 5,10-methenyltetrahydrofolate to 10-formyltetrahydrofolate. The chain is Bifunctional protein FolD from Azoarcus sp. (strain BH72).